Consider the following 48-residue polypeptide: Sperm protamine P1 (48 aa).

Belongs to the protamine P1 family. In terms of tissue distribution, testis.

It is found in the nucleus. The protein localises to the chromosome. Protamines substitute for histones in the chromatin of sperm during the haploid phase of spermatogenesis. They compact sperm DNA into a highly condensed, stable and inactive complex. This Monophyllus redmani (Greater Antillean long-tongued bat) protein is Sperm protamine P1 (PRM1).